The following is an 85-amino-acid chain: N.vectensis toxin 1 4 (85 aa).

A signal peptide spans 1–20 (MASFKIVIVCLALLVAVASA). Residues 21–36 (RRRDMMSDDELDYHYS) constitute a propeptide that is removed on maturation. 3 disulfide bridges follow: Cys42–Cys82, Cys44–Cys72, and Cys65–Cys83.

The protein belongs to the sea anemone sodium channel inhibitory toxin family. Type II subfamily. As to expression, expressed in ectodermal glands and in clumps outside of the extodermal layer. Is not expressed in nematocytes. In adult female tissues, shows similar expression levels in mesenteries (gametes-producing tissue), tentacles, pharynx and physa.

It localises to the secreted. Its function is as follows. Binds to site 3 of voltage-gated sodium channels and inhibits the inactivation process. Is highly active on DmNav1/TipE (drosophila) and is only extremely weakly active on rat Nav1.4-beta-1/SCN4A-SCN1B, and on human Nav1.5-beta-1/SCN5A-beta-1. This reveals high specificity for arthropod over mammalian channels. In vivo, when released into the medium, this recombinant toxin induces impaired swimming, paralysis and death of the crustacean A.nauplii within several hours. Also causes paralysis of cherry shrimps immediately after injection at very low doses. Its effect on zebrafish (D.rerio) larvae is also rapid, since it induces tail twitching accompanied by impaired swimming after 20 minutes and complete paralysis within 45 minutes. It has also been observed to cause death of zebrafish larvae within 1 hour. In Nematostella vectensis (Starlet sea anemone), this protein is N.vectensis toxin 1 4.